The following is a 102-amino-acid chain: Large ribosomal subunit protein bL21 (102 aa).

This sequence belongs to the bacterial ribosomal protein bL21 family. As to quaternary structure, part of the 50S ribosomal subunit. Contacts protein L20.

In terms of biological role, this protein binds to 23S rRNA in the presence of protein L20. This is Large ribosomal subunit protein bL21 from Bifidobacterium longum (strain DJO10A).